The chain runs to 192 residues: Adenylate kinase (192 aa).

Position 10–18 (10–18 (GVPGVGGTT)) interacts with ATP.

It belongs to the archaeal adenylate kinase family. As to quaternary structure, monomer.

It is found in the cytoplasm. It carries out the reaction AMP + ATP = 2 ADP. In Methanococcus maripaludis (strain C6 / ATCC BAA-1332), this protein is Adenylate kinase.